Consider the following 128-residue polypeptide: Histone H2A type 1-J (128 aa).

The disordered stretch occupies residues 1 to 22 (MSGRGKQGGKARAKAKTRSSRA). An N-acetylserine modification is found at Ser2. Ser2 is subject to Phosphoserine; by RPS6KA5. At Arg4 the chain carries Citrulline; alternate. A Symmetric dimethylarginine; by PRMT5; alternate modification is found at Arg4. Position 6 is an N6-(2-hydroxyisobutyryl)lysine (Lys6). The span at 7 to 19 (QGGKARAKAKTRS) shows a compositional bias: basic residues. At Lys10 the chain carries N6-(2-hydroxyisobutyryl)lysine; alternate. An N6-(beta-hydroxybutyryl)lysine; alternate mark is found at Lys10 and Lys14. Lys10 is modified (N6-lactoyllysine; alternate). Lys10 carries the post-translational modification N6-succinyllysine; alternate. Lys14 is covalently cross-linked (Glycyl lysine isopeptide (Lys-Gly) (interchain with G-Cter in ubiquitin); alternate). Lys16 is covalently cross-linked (Glycyl lysine isopeptide (Lys-Gly) (interchain with G-Cter in ubiquitin)). Lys37 carries the N6-(2-hydroxyisobutyryl)lysine; alternate modification. Lys37 carries the N6-(beta-hydroxybutyryl)lysine; alternate modification. Position 37 is an N6-crotonyllysine; alternate (Lys37). N6-(2-hydroxyisobutyryl)lysine is present on residues Lys75 and Lys76. Lys96 bears the N6-(2-hydroxyisobutyryl)lysine; alternate mark. Lys96 is modified (N6-(beta-hydroxybutyryl)lysine; alternate). Lys96 carries the N6-succinyllysine; alternate modification. An N6-glutaryllysine; alternate modification is found at Lys96. The residue at position 100 (Lys100) is an N6-glutaryllysine. Residue Gln105 is modified to N5-methylglutamine. Lys119 is modified (N6-(2-hydroxyisobutyryl)lysine; alternate). Lys119 is modified (N6-(beta-hydroxybutyryl)lysine; alternate). Lys119 and Lys120 each carry N6-crotonyllysine; alternate. N6-glutaryllysine; alternate is present on residues Lys119 and Lys120. Residue Lys120 forms a Glycyl lysine isopeptide (Lys-Gly) (interchain with G-Cter in ubiquitin); alternate linkage. At Thr121 the chain carries Phosphothreonine; by DCAF1. Residue Lys126 is modified to N6-crotonyllysine; alternate. Lys126 carries the post-translational modification N6-glutaryllysine; alternate.

This sequence belongs to the histone H2A family. The nucleosome is a histone octamer containing two molecules each of H2A, H2B, H3 and H4 assembled in one H3-H4 heterotetramer and two H2A-H2B heterodimers. The octamer wraps approximately 147 bp of DNA. Post-translationally, deiminated on Arg-4 in granulocytes upon calcium entry. In terms of processing, monoubiquitination of Lys-120 (H2AK119Ub) by RING1, TRIM37 and RNF2/RING2 complex gives a specific tag for epigenetic transcriptional repression and participates in X chromosome inactivation of female mammals. It is involved in the initiation of both imprinted and random X inactivation. Ubiquitinated H2A is enriched in inactive X chromosome chromatin. Ubiquitination of H2A functions downstream of methylation of 'Lys-27' of histone H3 (H3K27me). H2AK119Ub by RNF2/RING2 can also be induced by ultraviolet and may be involved in DNA repair. Monoubiquitination of Lys-120 (H2AK119Ub) by TRIM37 may promote transformation of cells in a number of breast cancers. Following DNA double-strand breaks (DSBs), it is ubiquitinated through 'Lys-63' linkage of ubiquitin moieties by the E2 ligase UBE2N and the E3 ligases RNF8 and RNF168, leading to the recruitment of repair proteins to sites of DNA damage. Ubiquitination at Lys-14 and Lys-16 (H2AK13Ub and H2AK15Ub, respectively) in response to DNA damage is initiated by RNF168 that mediates monoubiquitination at these 2 sites, and 'Lys-63'-linked ubiquitin are then conjugated to monoubiquitin; RNF8 is able to extend 'Lys-63'-linked ubiquitin chains in vitro. Deubiquitinated by USP51 at Lys-14 and Lys-16 (H2AK13Ub and H2AK15Ub, respectively) after damaged DNA is repaired. H2AK119Ub and ionizing radiation-induced 'Lys-63'-linked ubiquitination (H2AK13Ub and H2AK15Ub) are distinct events. Phosphorylation on Ser-2 (H2AS1ph) is enhanced during mitosis. Phosphorylation on Ser-2 by RPS6KA5/MSK1 directly represses transcription. Acetylation of H3 inhibits Ser-2 phosphorylation by RPS6KA5/MSK1. Phosphorylation at Thr-121 (H2AT120ph) by DCAF1 is present in the regulatory region of many tumor suppresor genes and down-regulates their transcription. Post-translationally, glutamine methylation at Gln-105 (H2AQ104me) by FBL is specifically dedicated to polymerase I. It is present at 35S ribosomal DNA locus and impairs binding of the FACT complex. In terms of processing, symmetric dimethylation on Arg-4 by the PRDM1/PRMT5 complex may play a crucial role in the germ-cell lineage. Crotonylation (Kcr) is specifically present in male germ cells and marks testis-specific genes in post-meiotic cells, including X-linked genes that escape sex chromosome inactivation in haploid cells. Crotonylation marks active promoters and enhancers and confers resistance to transcriptional repressors. It is also associated with post-meiotically activated genes on autosomes. Post-translationally, lactylated in macrophages by EP300/P300 by using lactoyl-CoA directly derived from endogenous or exogenous lactate, leading to stimulates gene transcription.

It localises to the nucleus. The protein resides in the chromosome. Functionally, core component of nucleosome. Nucleosomes wrap and compact DNA into chromatin, limiting DNA accessibility to the cellular machineries which require DNA as a template. Histones thereby play a central role in transcription regulation, DNA repair, DNA replication and chromosomal stability. DNA accessibility is regulated via a complex set of post-translational modifications of histones, also called histone code, and nucleosome remodeling. This is Histone H2A type 1-J from Homo sapiens (Human).